Here is a 1045-residue protein sequence, read N- to C-terminus: Extracellular serine protease (1045 aa).

The signal sequence occupies residues 1 to 27 (MILNKKLKLAYCVFLGCYGLSLHSSLA). The Peptidase S8 domain maps to 49–396 (QWGLEAISAE…WGRVNLRDAI (348 aa)). Catalysis depends on charge relay system residues Asp-76, His-112, and Ser-341. Positions 646–1045 (SLASTENDKE…SVNAGLTWRF (400 aa)) are excised as a propeptide. The region spanning 769 to 1045 (IKADDNGAWA…SVNAGLTWRF (277 aa)) is the Autotransporter domain.

Belongs to the peptidase S8 family.

The protein localises to the secreted. This chain is Extracellular serine protease, found in Serratia marcescens.